We begin with the raw amino-acid sequence, 201 residues long: Recombination protein RecR (201 aa).

A C4-type zinc finger spans residues cysteine 57–cysteine 72. One can recognise a Toprim domain in the interval glycine 81 to proline 176.

This sequence belongs to the RecR family.

Functionally, may play a role in DNA repair. It seems to be involved in an RecBC-independent recombinational process of DNA repair. It may act with RecF and RecO. This chain is Recombination protein RecR, found in Proteus mirabilis (strain HI4320).